The sequence spans 96 residues: Co-chaperonin GroES (96 aa).

The protein belongs to the GroES chaperonin family. In terms of assembly, heptamer of 7 subunits arranged in a ring. Interacts with the chaperonin GroEL.

It localises to the cytoplasm. Functionally, together with the chaperonin GroEL, plays an essential role in assisting protein folding. The GroEL-GroES system forms a nano-cage that allows encapsulation of the non-native substrate proteins and provides a physical environment optimized to promote and accelerate protein folding. GroES binds to the apical surface of the GroEL ring, thereby capping the opening of the GroEL channel. The sequence is that of Co-chaperonin GroES from Acinetobacter baylyi (strain ATCC 33305 / BD413 / ADP1).